The following is a 337-amino-acid chain: ATP-dependent 6-phosphofructokinase (337 aa).

Residue G11 participates in ATP binding. 21–25 contributes to the ADP binding site; the sequence is RAVVR. ATP-binding positions include 72-73 and 102-105; these read RY and GDGS. A Mg(2+)-binding site is contributed by D103. 125–127 serves as a coordination point for substrate; the sequence is TID. Residue D127 is the Proton acceptor of the active site. An ADP-binding site is contributed by R154. Substrate-binding positions include R162 and 169–171; that span reads MGR. Residues 185–187, K212, and 214–216 each bind ADP; these read GAD and KNH. Residues E223, R245, and 251 to 254 each bind substrate; that span reads HILR.

It belongs to the phosphofructokinase type A (PFKA) family. ATP-dependent PFK group I subfamily. Prokaryotic clade 'B1' sub-subfamily. Homotetramer. Requires Mg(2+) as cofactor.

The protein resides in the cytoplasm. It carries out the reaction beta-D-fructose 6-phosphate + ATP = beta-D-fructose 1,6-bisphosphate + ADP + H(+). Its pathway is carbohydrate degradation; glycolysis; D-glyceraldehyde 3-phosphate and glycerone phosphate from D-glucose: step 3/4. With respect to regulation, allosterically activated by ADP and other diphosphonucleosides, and allosterically inhibited by phosphoenolpyruvate. Its function is as follows. Catalyzes the phosphorylation of D-fructose 6-phosphate to fructose 1,6-bisphosphate by ATP, the first committing step of glycolysis. This chain is ATP-dependent 6-phosphofructokinase, found in Streptococcus pyogenes serotype M1.